Consider the following 84-residue polypeptide: Large ribosomal subunit protein eL34 (84 aa).

This sequence belongs to the eukaryotic ribosomal protein eL34 family.

In Pyrobaculum aerophilum (strain ATCC 51768 / DSM 7523 / JCM 9630 / CIP 104966 / NBRC 100827 / IM2), this protein is Large ribosomal subunit protein eL34 (ribL34e).